The chain runs to 76 residues: Acyl carrier protein (76 aa).

The 76-residue stretch at 1 to 76 (MAIFDDIKEV…DVVRYIETNK (76 aa)) folds into the Carrier domain. An O-(pantetheine 4'-phosphoryl)serine modification is found at Ser-36.

Belongs to the acyl carrier protein (ACP) family. 4'-phosphopantetheine is transferred from CoA to a specific serine of apo-ACP by AcpS. This modification is essential for activity because fatty acids are bound in thioester linkage to the sulfhydryl of the prosthetic group.

The protein localises to the cytoplasm. It participates in lipid metabolism; fatty acid biosynthesis. In terms of biological role, carrier of the growing fatty acid chain in fatty acid biosynthesis. The polypeptide is Acyl carrier protein (Wolinella succinogenes (strain ATCC 29543 / DSM 1740 / CCUG 13145 / JCM 31913 / LMG 7466 / NCTC 11488 / FDC 602W) (Vibrio succinogenes)).